A 200-amino-acid chain; its full sequence is Probable GTP-binding protein EngB (200 aa).

The EngB-type G domain maps to 22–199 (GLDEIALAGR…KDWIQARLYE (178 aa)). GTP is bound by residues 30–37 (GRSNVGKS), 57–61 (GKTQT), 78–81 (DVPG), 145–148 (TKMD), and 178–180 (FSS). Mg(2+)-binding residues include Ser37 and Thr59.

The protein belongs to the TRAFAC class TrmE-Era-EngA-EngB-Septin-like GTPase superfamily. EngB GTPase family. Mg(2+) serves as cofactor.

Its function is as follows. Necessary for normal cell division and for the maintenance of normal septation. This Lactobacillus delbrueckii subsp. bulgaricus (strain ATCC 11842 / DSM 20081 / BCRC 10696 / JCM 1002 / NBRC 13953 / NCIMB 11778 / NCTC 12712 / WDCM 00102 / Lb 14) protein is Probable GTP-binding protein EngB.